We begin with the raw amino-acid sequence, 29 residues long: ATP synthase subunit 9, mitochondrial (29 aa).

The protein belongs to the ATPase C chain family. In terms of assembly, F-type ATPases have 2 components, CF(1) - the catalytic core - and CF(0) - the membrane proton channel. CF(1) has five subunits: alpha(3), beta(3), gamma(1), delta(1), epsilon(1). CF(0) has three main subunits: a, b and c.

It is found in the mitochondrion membrane. In terms of biological role, mitochondrial membrane ATP synthase (F(1)F(0) ATP synthase or Complex V) produces ATP from ADP in the presence of a proton gradient across the membrane which is generated by electron transport complexes of the respiratory chain. F-type ATPases consist of two structural domains, F(1) - containing the extramembraneous catalytic core and F(0) - containing the membrane proton channel, linked together by a central stalk and a peripheral stalk. During catalysis, ATP synthesis in the catalytic domain of F(1) is coupled via a rotary mechanism of the central stalk subunits to proton translocation. Part of the complex F(0) domain. A homomeric c-ring of probably 10 subunits is part of the complex rotary element. The sequence is that of ATP synthase subunit 9, mitochondrial (ATP9) from Wickerhamomyces pijperi (Yeast).